Reading from the N-terminus, the 350-residue chain is Phosphotriesterase-related protein (350 aa).

A divalent metal cation-binding residues include His22, His24, Glu169, His201, His230, and Asp298.

It belongs to the metallo-dependent hydrolases superfamily. Phosphotriesterase family. The cofactor is a divalent metal cation.

The polypeptide is Phosphotriesterase-related protein (Drosophila pseudoobscura pseudoobscura (Fruit fly)).